The following is a 318-amino-acid chain: L-lactate dehydrogenase (318 aa).

NAD(+) is bound by residues valine 17, aspartate 38, lysine 43, tyrosine 69, and 83–84; that span reads GA. 2 residues coordinate substrate: glutamine 86 and arginine 92. NAD(+)-binding positions include serine 105, 122–124, and serine 147; that span reads ATN. Substrate is bound at residue 124 to 127; sequence NPVD. 152–155 provides a ligand contact to substrate; that stretch reads DTAR. Residues lysine 157 and histidine 172 each coordinate beta-D-fructose 1,6-bisphosphate. Histidine 179 serves as the catalytic Proton acceptor. Tyrosine 223 is subject to Phosphotyrosine. Threonine 232 is a binding site for substrate.

This sequence belongs to the LDH/MDH superfamily. LDH family. As to quaternary structure, homotetramer.

Its subcellular location is the cytoplasm. It catalyses the reaction (S)-lactate + NAD(+) = pyruvate + NADH + H(+). It participates in fermentation; pyruvate fermentation to lactate; (S)-lactate from pyruvate: step 1/1. With respect to regulation, allosterically activated by fructose 1,6-bisphosphate (FBP). Functionally, catalyzes the conversion of lactate to pyruvate. This Staphylococcus saprophyticus subsp. saprophyticus (strain ATCC 15305 / DSM 20229 / NCIMB 8711 / NCTC 7292 / S-41) protein is L-lactate dehydrogenase.